Consider the following 120-residue polypeptide: uncharacterized protein (120 aa).

This is an uncharacterized protein from Saccharomyces cerevisiae (strain ATCC 204508 / S288c) (Baker's yeast).